The following is an 83-amino-acid chain: uncharacterized protein (83 aa).

The chain crosses the membrane as a helical span at residues 50–70 (IMVFLGEAWIILIPFAIFCII).

Belongs to the plectrovirus ORF7 family.

The protein localises to the host membrane. This is an uncharacterized protein from Spiroplasma melliferum (SpV1).